A 99-amino-acid polypeptide reads, in one-letter code: MMNMQNMMRQAQKLQKQMEQKQADLAASQFTGKSAQELVTVTFTGDKKLISIDYKEAVVDPEDIETLQDMTTQAINDALSQVDDATKKIMGAFAGKMPF.

Positions 1–10 (MMNMQNMMRQ) are enriched in low complexity. The interval 1 to 20 (MMNMQNMMRQAQKLQKQMEQ) is disordered.

Belongs to the YbaB/EbfC family. Homodimer.

It is found in the cytoplasm. It localises to the nucleoid. Binds to DNA and alters its conformation. May be involved in regulation of gene expression, nucleoid organization and DNA protection. This chain is Nucleoid-associated protein SAG1747, found in Streptococcus agalactiae serotype V (strain ATCC BAA-611 / 2603 V/R).